The following is a 306-amino-acid chain: Ribosomal protein L11 methyltransferase (306 aa).

S-adenosyl-L-methionine contacts are provided by threonine 154, glycine 179, aspartate 201, and asparagine 242.

The protein belongs to the methyltransferase superfamily. PrmA family.

It localises to the cytoplasm. It catalyses the reaction L-lysyl-[protein] + 3 S-adenosyl-L-methionine = N(6),N(6),N(6)-trimethyl-L-lysyl-[protein] + 3 S-adenosyl-L-homocysteine + 3 H(+). Functionally, methylates ribosomal protein L11. The sequence is that of Ribosomal protein L11 methyltransferase from Stenotrophomonas maltophilia (strain K279a).